The sequence spans 166 residues: Large ribosomal subunit protein uL10 (166 aa).

Belongs to the universal ribosomal protein uL10 family. Part of the ribosomal stalk of the 50S ribosomal subunit. The N-terminus interacts with L11 and the large rRNA to form the base of the stalk. The C-terminus forms an elongated spine to which L12 dimers bind in a sequential fashion forming a multimeric L10(L12)X complex.

Functionally, forms part of the ribosomal stalk, playing a central role in the interaction of the ribosome with GTP-bound translation factors. This is Large ribosomal subunit protein uL10 from Pseudomonas syringae pv. syringae (strain B728a).